The chain runs to 1108 residues: Receptor-type guanylate cyclase gcy-20 (1108 aa).

The N-terminal stretch at 1-15 (MRILLLLLQNILVFC) is a signal peptide. Residues 16-474 (QFLQTIKVGL…ECPADFVKEY (459 aa)) lie on the Extracellular side of the membrane. Asparagine 66, asparagine 131, asparagine 319, asparagine 341, asparagine 366, and asparagine 380 each carry an N-linked (GlcNAc...) asparagine glycan. A helical membrane pass occupies residues 475 to 495 (LVYTIIAAFIVILALLAGCAG). The Protein kinase domain maps to 483–803 (FIVILALLAG…IEQVRSHLNG (321 aa)). ATP contacts are provided by residues 489 to 497 (LLAGCAGLL) and lysine 571. Residues 496–1108 (LLYTMHMKRK…QAGDNNSETV (613 aa)) are Cytoplasmic-facing. Residues 876–1006 (TIFFSDVVQF…DAVNTASRME (131 aa)) form the Guanylate cyclase domain. Residues 1083 to 1108 (LEKNAEGSETSSLSVDQAGDNNSETV) are disordered. A compositionally biased stretch (polar residues) spans 1089–1108 (GSETSSLSVDQAGDNNSETV).

It belongs to the adenylyl cyclase class-4/guanylyl cyclase family. In terms of tissue distribution, expressed asymmetrically in ASE left (ASEL) sensory neuron. Expressed in excretory gland and canal cell.

It localises to the cell membrane. It carries out the reaction GTP = 3',5'-cyclic GMP + diphosphate. Guanylate cyclase involved in the production of the second messenger cGMP. This Caenorhabditis elegans protein is Receptor-type guanylate cyclase gcy-20.